Reading from the N-terminus, the 661-residue chain is Ecdysteroid-phosphate phosphatase (661 aa).

One can recognise a UBA domain in the interval 16–57 (KQDVSPLQILLQMGFRRQRALKALAATGNRSVQLASDWLLTH). In terms of domain architecture, SH3 spans 235 to 300 (ANHQVYKVTQ…PAVYTRRTAE (66 aa)). Arginine 409 is an active-site residue. Histidine 410 functions as the Tele-phosphohistidine intermediate in the catalytic mechanism. Residue histidine 590 is part of the active site.

In terms of assembly, homodimer. In terms of tissue distribution, detected in non-diapause eggs, with highest expression between 2 and 5 days after oviposition. Not detected in other tissues tested.

It localises to the cytoplasm. It is found in the cytosol. The catalysed reaction is ecdysone 22-phosphate + H2O = ecdysone + phosphate. The enzyme catalyses 20-hydroxyecdysone 22-phosphate + H2O = 20-hydroxyecdysone + phosphate. It carries out the reaction 2-deoxyecdysone 22-phosphate + H2O = 2-deoxyecdysone + phosphate. It catalyses the reaction O-phospho-L-tyrosyl-[protein] + H2O = L-tyrosyl-[protein] + phosphate. Competitively inhibited by 4-nitrophenyl phosphate (para-nitrophenylphosphate, pNPP). Also inhibited by tungstate, vanadate, and phosphate. Its function is as follows. Steroid phosphatase which catalyzes the conversion of inactive phosphorylated ecdysteroids into their active forms. Shows high activity towards ecdysone 22-phosphate (E22P). Has lower activity towards other ecdysteriod phosphates including 20-hydroxyecdysone 22-phosphate (20E22P) and 2-deoxyecdysone 22-phosphate (2dE22P). Also has protein tyrosine phosphatase activity. The protein is Ecdysteroid-phosphate phosphatase of Bombyx mori (Silk moth).